The primary structure comprises 139 residues: MSSLPVPYKLPVSLSVGSCVIIKGTPIHSFINDPQLQVDFYTDMDEDSDIAFRFRVHFGNHVVMNRREFGIWMLEETTDYVPFEDGKQFELCIYVHYNEYEIKVNGIRIYGFVHRIPPSFVKMVQVSRDISLTSVCVCN.

Residues 6 to 138 enclose the Galectin domain; sequence VPYKLPVSLS…DISLTSVCVC (133 aa).

As to quaternary structure, homodimer; disulfide-linked. Detected in adult and fetal spleen, fetal kidney, adult urinary bladder and placenta. Placental expression originates predominantly from the syncytiotrophoblast.

The protein resides in the cytoplasm. It is found in the nucleus matrix. Functionally, binds beta-galactoside and lactose. Strong inducer of T-cell apoptosis. Has hemagglutinating activity towards chicken erythrocytes. This chain is Galactoside-binding soluble lectin 13 (LGALS13), found in Homo sapiens (Human).